The sequence spans 92 residues: Acylphosphatase (92 aa).

Cys-5 and Cys-49 are joined by a disulfide. The region spanning 5 to 92 (CIIAWVYGRV…SGELTDFRIR (88 aa)) is the Acylphosphatase-like domain. Residues Arg-20 and Asn-38 contribute to the active site.

This sequence belongs to the acylphosphatase family.

It carries out the reaction an acyl phosphate + H2O = a carboxylate + phosphate + H(+). This chain is Acylphosphatase, found in Escherichia coli O6:H1 (strain CFT073 / ATCC 700928 / UPEC).